Consider the following 308-residue polypeptide: MGKTLVFGHKNPDTDTICSAIAYADLKNKIGVEAEAVRLGEINGETQFALDFFKQEAPRFIETAANETKQVILVDHNEFQQSVSDIDQVQVTEVIDHHRIANFETSEPLYYRAEPVGCTATILNKMYKENQVKIEKEIAGLLLSAIISDSLLFKSPTCTQQDIDAAHELAEIAGVDPEVYGLDMLKAGADLSQKTVQELITIDAKEFALGNSKVEIAQVNTVDIAEVTARQTDIEAKINEVIAAKGLDLFVLVITDILENDSLALALGAEAAKVEKAFHVTLENNTALLKGVVSRKKQVVPALTDALS.

Mn(2+) is bound by residues His9, Asp13, Asp15, Asp75, His97, and Asp149.

Belongs to the PPase class C family. Requires Mn(2+) as cofactor.

It is found in the cytoplasm. It catalyses the reaction diphosphate + H2O = 2 phosphate + H(+). In Bacillus pumilus (strain SAFR-032), this protein is Probable manganese-dependent inorganic pyrophosphatase.